We begin with the raw amino-acid sequence, 549 residues long: NADH-quinone oxidoreductase subunit N (549 aa).

Transmembrane regions (helical) follow at residues Leu-26–Val-46, Ala-57–Leu-77, Pro-96–Ala-116, His-148–Ala-168, Phe-171–Leu-191, Tyr-206–Gly-226, Leu-253–Phe-273, Leu-297–Ala-317, Pro-321–Gln-341, Leu-347–Asn-367, Met-375–Val-395, Ala-421–Ile-441, Ser-466–Ala-486, and Gly-496–Leu-516.

Belongs to the complex I subunit 2 family. In terms of assembly, NDH-1 is composed of 14 different subunits. Subunits NuoA, H, J, K, L, M, N constitute the membrane sector of the complex.

Its subcellular location is the cell membrane. The enzyme catalyses a quinone + NADH + 5 H(+)(in) = a quinol + NAD(+) + 4 H(+)(out). Functionally, NDH-1 shuttles electrons from NADH, via FMN and iron-sulfur (Fe-S) centers, to quinones in the respiratory chain. The immediate electron acceptor for the enzyme in this species is believed to be a menaquinone. Couples the redox reaction to proton translocation (for every two electrons transferred, four hydrogen ions are translocated across the cytoplasmic membrane), and thus conserves the redox energy in a proton gradient. The protein is NADH-quinone oxidoreductase subunit N of Thermobifida fusca (strain YX).